Consider the following 158-residue polypeptide: D-aminoacyl-tRNA deacylase (158 aa).

Residues 143-144 (GP) carry the Gly-cisPro motif, important for rejection of L-amino acids motif.

It belongs to the DTD family. As to quaternary structure, homodimer.

The protein resides in the cytoplasm. It catalyses the reaction glycyl-tRNA(Ala) + H2O = tRNA(Ala) + glycine + H(+). The catalysed reaction is a D-aminoacyl-tRNA + H2O = a tRNA + a D-alpha-amino acid + H(+). Functionally, an aminoacyl-tRNA editing enzyme that deacylates mischarged D-aminoacyl-tRNAs. Also deacylates mischarged glycyl-tRNA(Ala), protecting cells against glycine mischarging by AlaRS. Acts via tRNA-based rather than protein-based catalysis; rejects L-amino acids rather than detecting D-amino acids in the active site. By recycling D-aminoacyl-tRNA to D-amino acids and free tRNA molecules, this enzyme counteracts the toxicity associated with the formation of D-aminoacyl-tRNA entities in vivo and helps enforce protein L-homochirality. The protein is D-aminoacyl-tRNA deacylase of Solidesulfovibrio magneticus (strain ATCC 700980 / DSM 13731 / RS-1) (Desulfovibrio magneticus).